Here is a 951-residue protein sequence, read N- to C-terminus: MGVPAFFRWLSRKYPSIIVNCVEEKPKECNGVKIPVDASKPNPNDVEFDNLYLDMNGIIHPCTHPEDKPAPKNEDEMMVAIFEYIDRLFNIVRPRRLLYMAIDGVAPRAKMNQQRSRRFRASKEGMEAAVEKQRVREEILAKGGFLPPEEIKERFDSNCITPGTEFMDNLAKCLRYYIADRLNNDPGWKNLTVILSDASAPGEGEHKIMDYIRRQRAQPNHDPNTHHCLCGADADLIMLGLATHEPNFTIIREEFKPNKPKPCALCNQFGHEVKDCEGLPREKKGKHDELADSLPCAEGEFIFLRLNVLREYLERELTMASLPFPFDVERSIDDWVFMCFFVGNDFLPHLPSLEIREGAIDRLVNIYKNVVHKTGGYLTESGYVNLQRVQMIMLAVGEVEDSIFKKRKDDEDSFRRRQKEKRKRMKRDQPAFTPSGILTPHALGSRNSPGCQVASNPRQAAYEMRMQRNSSPSISPNTSFASDGSPSPLGGIKRKAEDSDSEPEPEDNVRLWEAGWKQRYYKNKFDVDAADEKFRRKVVQSYVEGLCWVLRYYYQGCASWKWYYPFHYAPFASDFEGIADMSSEFEKGTKPFKPLEQLMGVFPAASGNFLPPTWRKLMSDPDSSIIDFYPEDFAIDLNGKKYAWQGVALLPFVDERRLRAALEEVYPDLTPEENRRNSLGGDVLFVGKLHPLRDFILELYQTGSTEPVDVPPELCHGIQGTFSLDEEAILPDQTVCSPVPMLRDLTQNTAVSINFKDPQFAEDYVFKAAMLPGARKPATVLKPGDWEKSSNGRQWKPQLGFNRDRRPVHLDQAAFRTLGHVTPRGSGTSVYTNTALPPANYQGNNYRPLLRGQAQIPKLMSNMRPQDSWRGPPPLFQQHRFERSVGAEPLLPWNRMIQNQNAAFQPNQYQMLGGPGGYPPRRDDHRGGRQGYPREGRKYPLPPPSGRYSWN.

A CCHC-type zinc finger spans residues 262–278 (PCALCNQFGHEVKDCEG). Lys-286 is modified (N6-acetyllysine). Residues 408 to 508 (KDDEDSFRRR…SDSEPEPEDN (101 aa)) form a disordered region. Residues 416-426 (RRQKEKRKRMK) show a composition bias toward basic residues. Phosphothreonine is present on Thr-439. 2 stretches are compositionally biased toward polar residues: residues 445 to 458 (SRNS…SNPR) and 467 to 485 (QRNS…SDGS). Residues Ser-448, Ser-471, Ser-473, Ser-475, Ser-482, Ser-487, Ser-499, Ser-501, and Ser-678 each carry the phosphoserine modification. Arg-824, Arg-847, and Arg-851 each carry asymmetric dimethylarginine; alternate. Arg-824, Arg-847, and Arg-851 each carry omega-N-methylarginine; alternate. Position 880 is an asymmetric dimethylarginine (Arg-880). At Arg-883 the chain carries Asymmetric dimethylarginine; alternate. The residue at position 883 (Arg-883) is an Omega-N-methylarginine; alternate. Arg-895 carries the omega-N-methylarginine modification. Residues 907–951 (NQYQMLGGPGGYPPRRDDHRGGRQGYPREGRKYPLPPPSGRYSWN) form a disordered region. The segment covering 920–938 (PRRDDHRGGRQGYPREGRK) has biased composition (basic and acidic residues). Position 947 is an asymmetric dimethylarginine; alternate (Arg-947). Omega-N-methylarginine; alternate is present on Arg-947.

It belongs to the 5'-3' exonuclease family. XRN2/RAT1 subfamily. In terms of assembly, interacts with POLR2A and SMN1/SMN2. Interacts with CDKN2AIP and NKRF. Interacts with CDKN2AIPNL; the interaction is direct. Interacts with TRIM71 (via NHL repeats) in an RNA-dependent manner. Interacts with DHX34; the interaction is RNA-independent. In terms of tissue distribution, expressed in the spleen, testis, heart, brain, lung, liver, skeletal muscle, and kidney.

The protein localises to the nucleus. The protein resides in the nucleolus. Functionally, possesses 5'-&gt;3' exoribonuclease activity. May promote the termination of transcription by RNA polymerase II. During transcription termination, cleavage at the polyadenylation site liberates a 5' fragment which is subsequently processed to form the mature mRNA and a 3' fragment which remains attached to the elongating polymerase. The processive degradation of this 3' fragment by this protein may promote termination of transcription. Binds to RNA polymerase II (RNAp II) transcription termination R-loops formed by G-rich pause sites. This is 5'-3' exoribonuclease 2 (Xrn2) from Mus musculus (Mouse).